A 406-amino-acid chain; its full sequence is Argininosuccinate synthase (406 aa).

ATP contacts are provided by residues Ala10–Ser18 and Ala37. L-citrulline is bound by residues Tyr88 and Ser93. Residue Gly118 coordinates ATP. The L-aspartate site is built by Thr120, Asn124, and Asp125. Asn124 is an L-citrulline binding site. L-citrulline contacts are provided by Arg128, Ser179, Ser188, Glu264, and Tyr276.

The protein belongs to the argininosuccinate synthase family. Type 1 subfamily. Homotetramer.

The protein localises to the cytoplasm. It carries out the reaction L-citrulline + L-aspartate + ATP = 2-(N(omega)-L-arginino)succinate + AMP + diphosphate + H(+). Its pathway is amino-acid biosynthesis; L-arginine biosynthesis; L-arginine from L-ornithine and carbamoyl phosphate: step 2/3. This is Argininosuccinate synthase from Dinoroseobacter shibae (strain DSM 16493 / NCIMB 14021 / DFL 12).